Reading from the N-terminus, the 247-residue chain is Probable dihydroorotate dehydrogenase B (NAD(+)), electron transfer subunit (247 aa).

The FAD-binding FR-type domain maps to 1-87 (MLRRVSIEET…RGPYGHGFSG (87 aa)). Residues Cys-201, Cys-206, Cys-209, and Cys-217 each contribute to the [2Fe-2S] cluster site.

It belongs to the PyrK family. As to quaternary structure, heterotetramer of 2 PyrK and 2 PyrD type B subunits. [2Fe-2S] cluster is required as a cofactor. It depends on FAD as a cofactor.

It participates in pyrimidine metabolism; UMP biosynthesis via de novo pathway; orotate from (S)-dihydroorotate (NAD(+) route): step 1/1. Its function is as follows. Responsible for channeling the electrons from the oxidation of dihydroorotate from the FMN redox center in the PyrD type B subunit to the ultimate electron acceptor NAD(+). In Pyrococcus furiosus (strain ATCC 43587 / DSM 3638 / JCM 8422 / Vc1), this protein is Probable dihydroorotate dehydrogenase B (NAD(+)), electron transfer subunit.